The chain runs to 155 residues: Ribonuclease H (155 aa).

Positions methionine 1–alanine 146 constitute an RNase H type-1 domain. Mg(2+)-binding residues include aspartate 9, glutamate 52, aspartate 74, and aspartate 138.

Belongs to the RNase H family. As to quaternary structure, monomer. The cofactor is Mg(2+).

It is found in the cytoplasm. It carries out the reaction Endonucleolytic cleavage to 5'-phosphomonoester.. Functionally, endonuclease that specifically degrades the RNA of RNA-DNA hybrids. In Paracoccus denitrificans (strain Pd 1222), this protein is Ribonuclease H.